We begin with the raw amino-acid sequence, 364 residues long: MKTFLVCALEPSANLHLKEVLKAYKKDFGEFELHGIYDESLCKEFDLNSKPLYSSHEFSAMGFIEVLPLIFKAKKAIKELVNLTLSQTMDAVLCIDSPAFNIPFAKALKKAGSKIPRIYYILPQVWAWKKGRIPIIESHFDILASILPFDNQFFNKSTYIGHPLLDEIKEFKNQEDINHTFSKKDDEKTIAFLPGSRRSEIRRLMPIFKELSQKFKGEKILCVPSFNLEKLEVYGDISEFKIESNTPKVLKKADFAFICSGTATLEAALVGTPFVLAYKAKAIDIFIAKLFVKLKHIGLANIFCDFAGKEALNPEFLQDKVNVLNLYEAYNKYDYKAFFAKVDFLKEYLQFGSAKNLAKILNEI.

Belongs to the LpxB family.

The catalysed reaction is a lipid X + a UDP-2-N,3-O-bis[(3R)-3-hydroxyacyl]-alpha-D-glucosamine = a lipid A disaccharide + UDP + H(+). It participates in bacterial outer membrane biogenesis; LPS lipid A biosynthesis. Its function is as follows. Condensation of UDP-2,3-diacylglucosamine and 2,3-diacylglucosamine-1-phosphate to form lipid A disaccharide, a precursor of lipid A, a phosphorylated glycolipid that anchors the lipopolysaccharide to the outer membrane of the cell. This is Lipid-A-disaccharide synthase from Campylobacter jejuni (strain RM1221).